The chain runs to 112 residues: Putative acyl carrier protein, mitochondrial (112 aa).

Residues 1–28 (MLSRFSSQLRFISAVRPVIPKFQPLRFY) constitute a mitochondrion transit peptide. The Carrier domain occupies 33–109 (PDAEKRILKV…DAISYITKNP (77 aa)). Ser69 carries the post-translational modification O-(pantetheine 4'-phosphoryl)serine.

The protein belongs to the acyl carrier protein (ACP) family. In terms of processing, 4'-phosphopantetheine is transferred from CoA to a specific serine of apo-ACP by acpS. This modification is essential for activity because fatty acids are bound in thioester linkage to the sulfhydryl of the prosthetic group.

Its subcellular location is the mitochondrion. The protein operates within lipid metabolism; fatty acid biosynthesis. Functionally, carrier of the growing fatty acid chain in fatty acid biosynthesis. May be involved in the synthesis of very-long-chain fatty acids. In Schizosaccharomyces pombe (strain 972 / ATCC 24843) (Fission yeast), this protein is Putative acyl carrier protein, mitochondrial.